The sequence spans 541 residues: Presenilin homolog (541 aa).

Polar residues-rich tracts occupy residues 1–14 (MAAVNLQASCSSGL) and 43–52 (NNYGSSNQDQ). Disordered stretches follow at residues 1–52 (MAAV…NQDQ) and 69–92 (CGSRPSRLTGGGGGSGGPPTNEME). Residues 1–106 (MAAVNLQASC…LKYGAQHVIK (106 aa)) are Cytoplasmic-facing. The chain crosses the membrane as a helical span at residues 107–127 (LFVPVSLCMLVVVATINSISF). Over 128–154 (YNSTDVYLLYTPFHEQSPEPSVKFWSA) the chain is Lumenal. An N-linked (GlcNAc...) asparagine glycan is attached at Asn-129. A helical transmembrane segment spans residues 155–175 (LANSLILMSVVVVMTFLLIVL). Over 176–182 (YKKRCYR) the chain is Cytoplasmic. The chain crosses the membrane as a helical span at residues 183 to 203 (IIHGWLILSSFMLLFIFTYLY). The Lumenal segment spans residues 204–216 (LEELLRAYNIPMD). Residues 217–237 (YPTALLIMWNFGVVGMMSIHW) traverse the membrane as a helical segment. At 238 to 242 (QGPLR) the chain is on the cytoplasmic side. Residues 243–263 (LQQGYLIFVAALMALVFIKYL) traverse the membrane as a helical segment. At 264–265 (PE) the chain is on the lumenal side. A helical transmembrane segment spans residues 266–286 (WTAWAVLAAISIWDLIAVLSP). Asp-279 is a catalytic residue. Residues 287-453 (RGPLRILVET…QNHPDGQEER (167 aa)) are Cytoplasmic-facing. Residues 320–481 (NTVTPQQSQA…ASSYGDWTTT (162 aa)) are interaction with Mettl2. Residues 327–350 (SQATASSSPSSSNSTTTTRATQNS) are compositionally biased toward low complexity. Disordered regions lie at residues 327–379 (SQAT…DGSV) and 421–449 (EVQSTQSGNAQRSNEYRTVTAPDQNHPDG). 2 stretches are compositionally biased toward polar residues: residues 361-370 (GQRTGNSHPR) and 421-443 (EVQSTQSGNAQRSNEYRTVTAPD). Residues 454 to 474 (GIKLGLGDFIFYSVLVGKASS) traverse the membrane as a helical segment. The active site involves Asp-461. Residues 475–481 (YGDWTTT) are Lumenal-facing. Residues 482-502 (IACFVAILIGLCLTLLLLAIW) form a helical membrane-spanning segment. Residues 503–506 (RKAL) lie on the Cytoplasmic side of the membrane. The PAL signature appears at 507 to 509 (PAL). Positions 507-527 (PALPISITFGLIFCFATSAVV) form an intramembrane region, helical. Topologically, residues 528-541 (KPFMEDLSAKQVFI) are cytoplasmic.

This sequence belongs to the peptidase A22A family. In terms of assembly, homodimer. Component of the gamma-secretase complex, a complex composed of a presenilin (Psn) homodimer, nicastrin (Nct), Aph-1 and Pen-2. Interacts with Mettl2. Isoform 2 shows a better interaction with Mettl2 than isoform 1. Cleaved. The cleavage, which probably takes place between the 6th and the 7th transmembrane regions, may be required for activation of the gamma-secretase activity. In terms of tissue distribution, maternally expressed in nurse and follicle cells. In early embryos, expressed in all or most cells and later increases in CNS and epidermal tissues. In larvae, expression is seen in all imaginal disks, brain and optic lobes. In pupae, expression is seen in eye disk and brain.

It is found in the endoplasmic reticulum membrane. It localises to the golgi apparatus membrane. Functionally, probable catalytic subunit of the gamma-secretase complex, an endoprotease complex that catalyzes the intramembrane cleavage of integral membrane proteins such as Notch receptor. Required for S3 cleavage of Notch, which releases activated Notch protein from the cell membrane. Involved in the patterning of the optic lobes. This chain is Presenilin homolog (Psn), found in Drosophila melanogaster (Fruit fly).